Here is a 225-residue protein sequence, read N- to C-terminus: Small ribosomal subunit protein eS1 (225 aa).

Belongs to the eukaryotic ribosomal protein eS1 family.

This chain is Small ribosomal subunit protein eS1, found in Methanococcus maripaludis (strain C6 / ATCC BAA-1332).